The primary structure comprises 35 residues: Photosystem II reaction center protein T (35 aa).

Residues A3 to F23 traverse the membrane as a helical segment.

Belongs to the PsbT family. In terms of assembly, PSII is composed of 1 copy each of membrane proteins PsbA, PsbB, PsbC, PsbD, PsbE, PsbF, PsbH, PsbI, PsbJ, PsbK, PsbL, PsbM, PsbT, PsbY, PsbZ, Psb30/Ycf12, at least 3 peripheral proteins of the oxygen-evolving complex and a large number of cofactors. It forms dimeric complexes.

Its subcellular location is the plastid. The protein resides in the chloroplast thylakoid membrane. In terms of biological role, found at the monomer-monomer interface of the photosystem II (PS II) dimer, plays a role in assembly and dimerization of PSII. PSII is a light-driven water plastoquinone oxidoreductase, using light energy to abstract electrons from H(2)O, generating a proton gradient subsequently used for ATP formation. This Zygnema circumcarinatum (Green alga) protein is Photosystem II reaction center protein T.